A 137-amino-acid chain; its full sequence is Interferon-induced transmembrane protein 3 (137 aa).

The Cytoplasmic portion of the chain corresponds to 1–57 (MNHTSQAFITAASGGQPPNYERIKEEYEVAEMGAPHGSASVRTTVINMPREVSVPDH). The residue at position 20 (Tyr20) is a Phosphotyrosine. A Glycyl lysine isopeptide (Lys-Gly) (interchain with G-Cter in ubiquitin) cross-link involves residue Lys24. Position 27 is a phosphotyrosine (Tyr27). Residues 58-78 (VVWSLFNTLFMNFCCLGFIAY) constitute an intramembrane region (helical). Residues 60-93 (WSLFNTLFMNFCCLGFIAYAYSVKSRDRKMVGDV) are interaction with SPP1. S-palmitoyl cysteine attachment occurs at residues Cys71 and Cys72. Topologically, residues 79 to 109 (AYSVKSRDRKMVGDVTGAQAYASTAKCLNIS) are cytoplasmic. Residues Lys83, Lys88, and Lys104 each participate in a glycyl lysine isopeptide (Lys-Gly) (interchain with G-Cter in ubiquitin) cross-link. The S-palmitoyl cysteine moiety is linked to residue Cys105. Residues 108 to 133 (ISTLVLSILMVVITIVSVIIIVLNAQ) form an interaction with VAPA region. Residues 110-130 (TLVLSILMVVITIVSVIIIVL) form a helical membrane-spanning segment. Residues 131-137 (NAQNLHT) lie on the Extracellular side of the membrane.

Belongs to the CD225/Dispanin family. In terms of assembly, interacts with ATP6V0B. Interacts with CD81. Interacts with SPP1; the interaction reduces OPN expression. Interacts with BRI3. Post-translationally, polyubiquitinated with both 'Lys-48' and 'Lys-63' linkages. Ubiquitination negatively regulates antiviral activity. Lys-24 is the most prevalent ubiquitination site. In terms of processing, phosphorylation at Tyr-20 is required for endosomal and lysosomal location. In terms of tissue distribution, expressed in acinar cell. Predominantly expressed in nascent primordial germ cells, as well as in gonadal germ cells.

The protein resides in the cell membrane. It localises to the late endosome membrane. The protein localises to the early endosome membrane. Its subcellular location is the lysosome membrane. It is found in the cytoplasm. The protein resides in the perinuclear region. In terms of biological role, IFN-induced antiviral protein which disrupts intracellular cholesterol homeostasis. Inhibits the entry of viruses to the host cell cytoplasm by preventing viral fusion with cholesterol depleted endosomes. May inactivate new enveloped viruses which buds out of the infected cell, by letting them go out with a cholesterol depleted membrane. Active against multiple viruses, including influenza A virus, SARS coronaviruses (SARS-CoV and SARS-CoV-2), Marburg virus (MARV), Ebola virus (EBOV), Dengue virus (DNV), West Nile virus (WNV), human immunodeficiency virus type 1 (HIV-1), hepatitis C virus (HCV) and vesicular stomatitis virus (VSV). Can inhibit: influenza virus hemagglutinin protein-mediated viral entry, MARV and EBOV GP1,2-mediated viral entry, SARS-CoV and SARS-CoV-2 S protein-mediated viral entry and VSV G protein-mediated viral entry. Plays a critical role in the structural stability and function of vacuolar ATPase (v-ATPase). Establishes physical contact with the v-ATPase of endosomes which is critical for proper clathrin localization and is also required for the function of the v-ATPase to lower the pH in phagocytic endosomes thus establishing an antiviral state. In hepatocytes, IFITM proteins act in a coordinated manner to restrict HCV infection by targeting the endocytosed HCV virion for lysosomal degradation. IFITM2 and IFITM3 display anti-HCV activity that may complement the anti-HCV activity of IFITM1 by inhibiting the late stages of HCV entry, possibly in a coordinated manner by trapping the virion in the endosomal pathway and targeting it for degradation at the lysosome. Exerts opposing activities on SARS-CoV-2, including amphipathicity-dependent restriction of virus at endosomes and amphipathicity-independent enhancement of infection at the plasma membrane. The protein is Interferon-induced transmembrane protein 3 of Mus musculus (Mouse).